The following is a 1259-amino-acid chain: Ankyrin repeat and sterile alpha motif domain-containing protein 1B (1259 aa).

ANK repeat units follow at residues 2-31 (GKDQELLEAARTGNVALVEKLLSGRKGGIL), 58-87 (SGYTALHHAALNGHKDIVLKLLQYEASTNV), 91-120 (KGYFPIHLAAWKGDVEIVKILIHHGPSHSR), 127-156 (ENETALHCAAQYGHSEVVAVLLEELTDPTI), 160-189 (KLETPLDLAALYGRLRVVKMIISAHPNLMS), 193-222 (RKHTPLHLAARNGHKAVVQVLLEAGMDVSC), and 225-254 (EKGSALHEAALFGKVDVVRVLLETGIDANI). The disordered stretch occupies residues 298-325 (HAQEDTAQETHLSSPAESPQKTKSETVT). Residues 306-325 (ETHLSSPAESPQKTKSETVT) show a composition bias toward polar residues. Residues S310, S311, S315, S353, and S364 each carry the phosphoserine modification. 4 disordered regions span residues 367–401 (ELGKNGSQSVRTSSTINLSPGEVEDEEEDPNSCGP), 490–513 (PGTSHHRNSSTGPTPDCSPPSPDT), 556–614 (CTSF…GSSP), and 631–661 (TCEDGPDEASLANSPLPFKQTPIENNPEPSV). A compositionally biased stretch (polar residues) spans 371 to 384 (NGSQSVRTSSTINL). At T503 the chain carries Phosphothreonine. A phosphoserine mark is found at S507 and S510. Low complexity predominate over residues 556–574 (CTSFTSSPAASPPTSSVET). Residues 575 to 587 (TEVKNEGAEHADD) are compositionally biased toward basic and acidic residues. S738 carries the phosphoserine modification. The interval 753 to 776 (VNWSKSSTAERSSKDNSERTPSFT) is disordered. Residue T772 is modified to Phosphothreonine. S774 is modified (phosphoserine). SAM domains are found at residues 809 to 875 (CPVQ…LPKM) and 883 to 948 (YHPT…RLHD). Y900 bears the Phosphotyrosine mark. A short sequence motif (nuclear localization signal) is located at residue H934. Residues 943 to 988 (GDRLHDDPPQKPPRSITLREPSGNHTPPQLSPSLSQSTYTTGGSLD) are disordered. Residues 968–983 (TPPQLSPSLSQSTYTT) show a composition bias toward low complexity. S973 bears the Phosphoserine mark. A Phosphotyrosine modification is found at Y1006. Residues 1055–1212 (IFQSCDYKAF…SFENKPSKPI (158 aa)) enclose the PID domain. The segment at 1196–1216 (HSSTLPESFENKPSKPIPKPR) is disordered.

In terms of assembly, interacts with EPHA8. Isoform 2 interacts with COIL.

The protein resides in the cytoplasm. It is found in the nucleus. The protein localises to the postsynaptic density. Its subcellular location is the cell projection. It localises to the dendritic spine. Functionally, isoform 2 may participate in the regulation of nucleoplasmic coilin protein interactions in neuronal and transformed cells. This is Ankyrin repeat and sterile alpha motif domain-containing protein 1B (Anks1b) from Mus musculus (Mouse).